A 268-amino-acid chain; its full sequence is Expansin-B3 (268 aa).

The first 25 residues, 1-25 (MAFSISKKAAVAALFSFLVVTCVAG), serve as a signal peptide directing secretion. The N-linked (GlcNAc...) asparagine glycan is linked to asparagine 30. The Expansin-like EG45 domain occupies 62 to 168 (GGACGFKNTN…KRVPCNFPGL (107 aa)). 3 disulfide bridges follow: cysteine 65/cysteine 93, cysteine 96/cysteine 163, and cysteine 101/cysteine 107. The Expansin-like CBD domain occupies 181–262 (VYFAVLVEYE…NWAPMAVYRS (82 aa)). Asparagine 238 carries N-linked (GlcNAc...) asparagine glycosylation.

It belongs to the expansin family. Expansin B subfamily. As to expression, expressed in roots, coleoptiles and internodes.

Its subcellular location is the secreted. It localises to the cell wall. The protein localises to the membrane. In terms of biological role, may cause loosening and extension of plant cell walls by disrupting non-covalent bonding between cellulose microfibrils and matrix glucans. No enzymatic activity has been found. May be required for rapid internodal elongation in deepwater rice during submergence. The chain is Expansin-B3 (EXPB3) from Oryza sativa subsp. japonica (Rice).